A 394-amino-acid polypeptide reads, in one-letter code: MDIHEYQAKELLARHGVHVPRGGLAYSPEQATYRAREIGGGKWVLKAQVHSGARGKAGGIKLCANDEEISSAAEAMLGRKLVTQQTGPRGKLISRLYLEEAVDIAQELYVGFVLDRKEERVMIVASAAGGMEIEDIVEKEPNSILRTSVDPGVGMQRFQAREIAFGLGLDHNLIGKATETIFSCYQVFRDYDASMLEINPLVVTRDGNLIALDAKMSFDENALFRRPEISELRDKSQEDPRETFASDRGLSYVGLDGNIGCIINGAGLAMATMDMIKIAGGEPANFLDIGGGASPERVAKSFRAVLGDKNVETILVNIFAGINRCDWVAEGVIKAIREVGVNVPLVVRLSGTKAEEGRRILADSGEAVIVADTLAEAAEKAVAAWRAAAKKKAA.

Residues 9-244 (KELLARHGVH…KSQEDPRETF (236 aa)) enclose the ATP-grasp domain. ATP contacts are provided by lysine 46, glutamate 99, valine 102, and glutamate 107. The Mg(2+) site is built by asparagine 199 and aspartate 213.

This sequence belongs to the succinate/malate CoA ligase beta subunit family. In terms of assembly, heterotetramer of two alpha and two beta subunits. Mg(2+) serves as cofactor.

The catalysed reaction is (S)-malate + ATP + CoA = (S)-malyl-CoA + ADP + phosphate. It functions in the pathway one-carbon metabolism; formaldehyde assimilation via serine pathway. The protein is Probable malate--CoA ligase subunit beta (mtkA) of Mesorhizobium japonicum (strain LMG 29417 / CECT 9101 / MAFF 303099) (Mesorhizobium loti (strain MAFF 303099)).